The chain runs to 616 residues: Prolactin receptor (616 aa).

A signal peptide spans 1 to 24 (MKENVASMIVFLLLLFLNIRLLKG). Over 25–234 (QSPPGKPFIF…QIPNDFTMKD (210 aa)) the chain is Extracellular. Fibronectin type-III domains are found at residues 27 to 128 (PPGK…VEPD) and 129 to 229 (PPVN…IPND). A disulfide bond links cysteine 36 and cysteine 46. N-linked (GlcNAc...) asparagine glycosylation is present at asparagine 59. The cysteines at positions 75 and 86 are disulfide-linked. 2 N-linked (GlcNAc...) asparagine glycosylation sites follow: asparagine 104 and asparagine 132. 2 residues coordinate Zn(2+): aspartate 211 and histidine 212. Positions 215-219 (WSVWS) match the WSXWS motif motif. Residues 235-258 (ITVWIFVAVLSTIICLIMVWAVAL) traverse the membrane as a helical segment. The Cytoplasmic segment spans residues 259 to 616 (KGYSMVTCIF…DPACFMHSLH (358 aa)). The Box 1 motif motif lies at 267-275 (IFPPVPGPK). Disordered stretches follow at residues 326-375 (MPAH…STFH), 454-492 (QSSK…PKEK), and 568-593 (ESTK…STAP). The span at 463 to 482 (GEEKATKQREVESSHSKAEQ) shows a compositional bias: basic and acidic residues.

Belongs to the type I cytokine receptor family. Type 1 subfamily. Interacts with SMARCA1. Interacts with NEK3 and VAV2 and this interaction is prolactin-dependent.

Its subcellular location is the membrane. Functionally, this is a receptor for the anterior pituitary hormone prolactin. This is Prolactin receptor (PRLR) from Oryctolagus cuniculus (Rabbit).